The sequence spans 363 residues: 3-isopropylmalate dehydrogenase (363 aa).

Residue 78–91 (GKKWDYLPIESRPE) coordinates NAD(+). Residues arginine 99, arginine 109, arginine 138, and aspartate 227 each contribute to the substrate site. The Mg(2+) site is built by aspartate 227, aspartate 251, and aspartate 255. 285-297 (GSAPDIEGKNIAN) lines the NAD(+) pocket.

This sequence belongs to the isocitrate and isopropylmalate dehydrogenases family. LeuB type 1 subfamily. Homodimer. Mg(2+) serves as cofactor. It depends on Mn(2+) as a cofactor.

Its subcellular location is the cytoplasm. It catalyses the reaction (2R,3S)-3-isopropylmalate + NAD(+) = 4-methyl-2-oxopentanoate + CO2 + NADH. It functions in the pathway amino-acid biosynthesis; L-leucine biosynthesis; L-leucine from 3-methyl-2-oxobutanoate: step 3/4. Catalyzes the oxidation of 3-carboxy-2-hydroxy-4-methylpentanoate (3-isopropylmalate) to 3-carboxy-4-methyl-2-oxopentanoate. The product decarboxylates to 4-methyl-2 oxopentanoate. This chain is 3-isopropylmalate dehydrogenase, found in Buchnera aphidicola subsp. Schizaphis graminum (strain Sg).